Reading from the N-terminus, the 225-residue chain is Protein YIP4 (225 aa).

2 positions are modified to phosphoserine: S27 and S28. The next 5 helical transmembrane spans lie at 91 to 111 (WDLW…ALST), 118 to 138 (SVFT…SLNI), 154 to 176 (LGYS…LIFI), 180 to 199 (VIVA…LQNS), and 205 to 225 (KLLA…IIFL).

This sequence belongs to the YIP1 family. As to quaternary structure, interacts with the YIP1 family members yip1 and yip5, and with several Rab GTPases.

Its subcellular location is the membrane. Its function is as follows. May be involved in proper membrane localization of Rab GTPases. This is Protein YIP4 from Schizosaccharomyces pombe (strain 972 / ATCC 24843) (Fission yeast).